Here is a 210-residue protein sequence, read N- to C-terminus: Phosphoenolpyruvate guanylyltransferase (210 aa).

Phosphoenolpyruvate-binding residues include Thr-130, Gly-146, and Ser-149.

The protein belongs to the CofC family.

It carries out the reaction phosphoenolpyruvate + GTP + H(+) = enolpyruvoyl-2-diphospho-5'-guanosine + diphosphate. The protein operates within cofactor biosynthesis; coenzyme F420 biosynthesis. Its function is as follows. Guanylyltransferase that catalyzes the activation of phosphoenolpyruvate (PEP) as enolpyruvoyl-2-diphospho-5'-guanosine, via the condensation of PEP with GTP. It is involved in the biosynthesis of coenzyme F420, a hydride carrier cofactor. This chain is Phosphoenolpyruvate guanylyltransferase, found in Roseiflexus castenholzii (strain DSM 13941 / HLO8).